A 221-amino-acid polypeptide reads, in one-letter code: uncharacterized protein (221 aa).

Positions 1–26 are cleaved as a signal peptide; that stretch reads MVRLVPRAFAATVALLAAGFSPATAS.

This is an uncharacterized protein from Mycobacterium tuberculosis (strain ATCC 25618 / H37Rv).